The primary structure comprises 350 residues: 2-oxoglutarate and iron-dependent oxygenase domain-containing protein 2 (350 aa).

Residues 215–309 (DSHRAFVVKY…RWNLVVWLRA (95 aa)) enclose the Fe2OG dioxygenase domain. His-235, Asp-237, and His-290 together coordinate Fe cation. Residue Arg-300 participates in 2-oxoglutarate binding.

The protein belongs to the OGFOD2 family. The cofactor is Fe(2+). It depends on L-ascorbate as a cofactor.

This Homo sapiens (Human) protein is 2-oxoglutarate and iron-dependent oxygenase domain-containing protein 2 (OGFOD2).